Consider the following 308-residue polypeptide: Eukaryotic translation initiation factor 3 subunit G-B (308 aa).

Disordered regions lie at residues 1-35 (MPTGDYDSKPSWADQVEEEGIDVEPLSPQIKKQDP) and 176-227 (STAD…DDNA). Over residues 185 to 194 (GAEPEPAQAP) the composition is skewed to low complexity. Positions 209-227 (GGSRRGESMQPNRRADDNA) are enriched in basic and acidic residues. The region spanning 227–305 (ATIRVTNLSE…LILNVEWAKP (79 aa)) is the RRM domain.

This sequence belongs to the eIF-3 subunit G family. In terms of assembly, component of the eukaryotic translation initiation factor 3 (eIF-3) complex, which is composed of 13 subunits: eif3a, eif3b, eif3c, eif3d, eif3e, eif3f, eif3g, eif3h, eif3i, eif3j, eif3k, eif3l and eif3m.

The protein resides in the cytoplasm. In terms of biological role, RNA-binding component of the eukaryotic translation initiation factor 3 (eIF-3) complex, which is involved in protein synthesis of a specialized repertoire of mRNAs and, together with other initiation factors, stimulates binding of mRNA and methionyl-tRNAi to the 40S ribosome. The eIF-3 complex specifically targets and initiates translation of a subset of mRNAs involved in cell proliferation. This subunit can bind 18S rRNA. This Xenopus laevis (African clawed frog) protein is Eukaryotic translation initiation factor 3 subunit G-B (eif3g-b).